The sequence spans 634 residues: GTP-binding protein 4 (634 aa).

Ala-2 is modified (N-acetylalanine). The residue at position 103 (Lys-103) is an N6-acetyllysine; alternate. A Glycyl lysine isopeptide (Lys-Gly) (interchain with G-Cter in SUMO2); alternate cross-link involves residue Lys-103. Ser-122 is modified (phosphoserine). The OBG-type G domain occupies 169–340 (RTLLLCGYPN…VKTEACDRLL (172 aa)). GTP-binding positions include 175–182 (GYPNVGKS), 221–225 (DTPGI), and 289–292 (NKCD). Lys-332 is covalently cross-linked (Glycyl lysine isopeptide (Lys-Gly) (interchain with G-Cter in SUMO2)). 3 positions are modified to phosphoserine: Ser-468, Ser-470, and Ser-472. A disordered region spans residues 495-517 (ILESKEKNTQGPRMPRTAKKVQR). The residue at position 522 (Lys-522) is an N6-acetyllysine. Positions 529–634 (VDMDDKDDAH…KRKAGKKDRR (106 aa)) are disordered. Residue Lys-534 forms a Glycyl lysine isopeptide (Lys-Gly) (interchain with G-Cter in SUMO2) linkage. The segment covering 544-554 (RRSRSITRKRK) has biased composition (basic residues). Ser-558 carries the phosphoserine modification. Residues 560-572 (PPSSVARSGSCSR) are compositionally biased toward polar residues. A compositionally biased stretch (basic and acidic residues) spans 573-585 (TPRDVSGLRDVKM). A compositionally biased stretch (basic residues) spans 586-604 (VKKAKTMMKNAQKKMNRLG). The span at 605–618 (KKGEADRHVFDMKP) shows a compositional bias: basic and acidic residues. The segment covering 619-634 (KHLLSGKRKAGKKDRR) has biased composition (basic residues).

It belongs to the TRAFAC class OBG-HflX-like GTPase superfamily. OBG GTPase family. NOG subfamily. As to quaternary structure, associates with pre-60S ribosomal particles. Interacts with MINAS-60 (product of an alternative open reading frame of RBM10).

Its subcellular location is the nucleus. The protein localises to the nucleolus. In terms of biological role, involved in the biogenesis of the 60S ribosomal subunit. Acts as a TP53 repressor, preventing TP53 stabilization and cell cycle arrest. The polypeptide is GTP-binding protein 4 (Homo sapiens (Human)).